Reading from the N-terminus, the 375-residue chain is G-protein coupled estrogen receptor 1 (375 aa).

An N-acetylmethionine modification is found at Met1. Residues 1-62 lie on the Extracellular side of the membrane; sequence MDVTSQARGV…QQYVIGLFLS (62 aa). Residues Asn25, Asn32, and Asn44 are each glycosylated (N-linked (GlcNAc...) asparagine). A helical membrane pass occupies residues 63–84; it reads CLYTIFLFPIGFVGNILILVVN. Residues 85–96 are Cytoplasmic-facing; the sequence is ISFREKMTIPDL. The helical transmembrane segment at 97 to 120 threads the bilayer; sequence YFINLAVADLILVADSLIEVFNLH. Residues 121–132 are Extracellular-facing; sequence ERYYDIAVLCTF. Cys130 and Cys207 are joined by a disulfide. A helical transmembrane segment spans residues 133–153; it reads MSLFLQVNMYSSVFFLTWMSF. Topologically, residues 154–175 are cytoplasmic; the sequence is DRYIALARAMRCSLFRTKHHAR. Residues 176-194 form a helical membrane-spanning segment; the sequence is LSCGLIWMASVSATLVPFT. Over 195-220 the chain is Extracellular; sequence AVHLQHTDEACFCFADVREVQWLEVT. A helical transmembrane segment spans residues 221-236; it reads LGFIVPFAIIGLCYSL. The Cytoplasmic segment spans residues 237–259; sequence IVRVLVRAHRHRGLRPRRQKALR. Residues 260 to 280 form a helical membrane-spanning segment; the sequence is MILAVVLVFFVCWLPENVFIS. Residues 281–306 lie on the Extracellular side of the membrane; it reads VHLLQRTQPGAAPCKQSFRHAHPLTG. Residues 307–327 traverse the membrane as a helical segment; that stretch reads HIVNLAAFSNSCLNPLIYSFL. The Cytoplasmic segment spans residues 328–375; that stretch reads GETFRDKLRLYIEQKTNLPALNRFCHAALKAVIPDSTEQSDVRFSSAV.

It belongs to the G-protein coupled receptor 1 family. Homodimer. Heterodimer; heterodimerizes with other G-protein-coupled receptor (GPCRs) like CRHR1, HTR1A and PAQR8. Interacts (via C-terminus tail motif) with DLG4 (via N-terminus tandem pair of PDZ domains); the interaction is direct and induces the increase of GPER1 protein levels residing at the plasma membrane surface in a estradiol-independent manner. Interacts with RAMP3; the interaction confers proper subcellular localization and function in cardioprotection. Interacts with KRT7 and KRT8. Interacts with EGFR; the interaction increases after agonist-induced stimulation in cancer-associated fibroblasts (CAF). Interacts with EGFR and ESR1. Ubiquitinated; ubiquitination occurs at the plasma membrane and leads to proteasome-mediated degradation. In terms of processing, glycosylated. As to expression, expressed in placenta, endothelial and epithelial cells, non laboring and laboring term myometrium, fibroblasts and cancer-associated fibroblasts (CAF), prostate cancer cells and invasive adenocarcinoma (at protein level). Ubiquitously expressed, but is most abundant in placenta. In brain regions, expressed as a 2.8 kb transcript in basal forebrain, frontal cortex, thalamus, hippocampus, caudate and putamen.

The protein localises to the nucleus. Its subcellular location is the cytoplasm. It is found in the perinuclear region. The protein resides in the cytoskeleton. It localises to the cell membrane. The protein localises to the basolateral cell membrane. Its subcellular location is the cytoplasmic vesicle membrane. It is found in the early endosome. The protein resides in the recycling endosome. It localises to the golgi apparatus membrane. The protein localises to the golgi apparatus. Its subcellular location is the trans-Golgi network. It is found in the endoplasmic reticulum membrane. The protein resides in the cell projection. It localises to the dendrite. The protein localises to the dendritic spine membrane. Its subcellular location is the axon. It is found in the postsynaptic density. The protein resides in the mitochondrion membrane. Functionally, G-protein coupled estrogen receptor that binds to 17-beta-estradiol (E2) with high affinity, leading to rapid and transient activation of numerous intracellular signaling pathways. Stimulates cAMP production, calcium mobilization and tyrosine kinase Src inducing the release of heparin-bound epidermal growth factor (HB-EGF) and subsequent transactivation of the epidermal growth factor receptor (EGFR), activating downstream signaling pathways such as PI3K/Akt and ERK/MAPK. Mediates pleiotropic functions among others in the cardiovascular, endocrine, reproductive, immune and central nervous systems. Has a role in cardioprotection by reducing cardiac hypertrophy and perivascular fibrosis in a RAMP3-dependent manner. Regulates arterial blood pressure by stimulating vasodilation and reducing vascular smooth muscle and microvascular endothelial cell proliferation. Plays a role in blood glucose homeostasis contributing to the insulin secretion response by pancreatic beta cells. Triggers mitochondrial apoptosis during pachytene spermatocyte differentiation. Stimulates uterine epithelial cell proliferation. Enhances uterine contractility in response to oxytocin. Contributes to thymic atrophy by inducing apoptosis. Attenuates TNF-mediated endothelial expression of leukocyte adhesion molecules. Promotes neuritogenesis in developing hippocampal neurons. Plays a role in acute neuroprotection against NMDA-induced excitotoxic neuronal death. Increases firing activity and intracellular calcium oscillations in luteinizing hormone-releasing hormone (LHRH) neurons. Inhibits early osteoblast proliferation at growth plate during skeletal development. Inhibits mature adipocyte differentiation and lipid accumulation. Involved in the recruitment of beta-arrestin 2 ARRB2 at the plasma membrane in epithelial cells. Also functions as a receptor for aldosterone mediating rapid regulation of vascular contractibility through the PI3K/ERK signaling pathway. Involved in cancer progression regulation. Stimulates cancer-associated fibroblast (CAF) proliferation by a rapid genomic response through the EGFR/ERK transduction pathway. Associated with EGFR, may act as a transcription factor activating growth regulatory genes (c-fos, cyclin D1). Promotes integrin alpha-5/beta-1 and fibronectin (FN) matrix assembly in breast cancer cells. The sequence is that of G-protein coupled estrogen receptor 1 from Homo sapiens (Human).